We begin with the raw amino-acid sequence, 468 residues long: MAQTLYDKLWQSHVVETGDDGTTVLYIDRHLLHEVTSPQAFEGLKLAGRRPWRVSANLMVADHNVPTTDRANGIADPTSRLQVETLDGNAHEYGLTYFSMRDKRQGIVHVIGPEQGATLPGMTVVCGDSHTSTHGAFGCLAHGIGTSEVEHVLATQTLLAQKSKAMLVQVDGALPDGVTAKDIVLAVIGKIGTAGGTGYAIEFAGSTIRSLSMEGRMTICNMAIEAGARAGMVAVDDITINYVKGRPLSPVGPHWDRAVEYWRTLHSDAGAKFDLVVTLNAAEIKPQVSWGTSPEMVVAVDGRVPDPDKEKDPTKRDGMEKALIYMALKPNTPITDIRIDKVFIGSCTNSRIEDLRAAAAVVRGKYRASNVKLAMVVPGSGLVKEQAEREGLDKIFKAAGFEWREPGCSMCLAMNADRLEPGERCASTSNRNFEGRQGAGGRTHLVSPAMAAAAGIEGHFVDVRALKH.

The [4Fe-4S] cluster site is built by cysteine 347, cysteine 408, and cysteine 411.

This sequence belongs to the aconitase/IPM isomerase family. LeuC type 1 subfamily. As to quaternary structure, heterodimer of LeuC and LeuD. It depends on [4Fe-4S] cluster as a cofactor.

The enzyme catalyses (2R,3S)-3-isopropylmalate = (2S)-2-isopropylmalate. The protein operates within amino-acid biosynthesis; L-leucine biosynthesis; L-leucine from 3-methyl-2-oxobutanoate: step 2/4. Functionally, catalyzes the isomerization between 2-isopropylmalate and 3-isopropylmalate, via the formation of 2-isopropylmaleate. This chain is 3-isopropylmalate dehydratase large subunit, found in Janthinobacterium sp. (strain Marseille) (Minibacterium massiliensis).